Reading from the N-terminus, the 224-residue chain is Ras-related protein Rab-11C (224 aa).

Residue 17 to 24 coordinates GTP; it reads GDSAVGKS. The Effector region signature appears at 39 to 47; that stretch reads TKATIGVDF. GTP is bound by residues 65–69 and 123–126; these read DTAGQ and NKSD. The segment at 194 to 224 is disordered; that stretch reads QGKKLTPLSDPAPQLTANTTSTHQEKKSGCC. 2 S-geranylgeranyl cysteine lipidation sites follow: Cys-223 and Cys-224.

Belongs to the small GTPase superfamily. Rab family.

Its subcellular location is the membrane. The chain is Ras-related protein Rab-11C (rab11C) from Dictyostelium discoideum (Social amoeba).